A 422-amino-acid chain; its full sequence is Kynurenine--oxoglutarate transaminase 1 (422 aa).

Substrate is bound by residues G36 and N185. K247 bears the N6-(pyridoxal phosphate)lysine mark. Residue R398 participates in substrate binding.

Belongs to the class-I pyridoxal-phosphate-dependent aminotransferase family. Homodimer. Requires pyridoxal 5'-phosphate as cofactor.

The protein localises to the cytoplasm. It is found in the cytosol. It catalyses the reaction L-kynurenine + 2-oxoglutarate = kynurenate + L-glutamate + H2O. The enzyme catalyses 3-phenylpyruvate + L-glutamine = 2-oxoglutaramate + L-phenylalanine. It carries out the reaction an S-substituted L-cysteine + H2O = a thiol + pyruvate + NH4(+). The protein operates within amino-acid degradation; L-kynurenine degradation; kynurenate from L-kynurenine: step 1/2. Inhibited by tryptophan, indole-3-pyruvic acid, 3-indolepropionic acid, DL-indole-3-lactic acid, indole-3-acetic acid (IAC), amino-oxyacetate (AOAA), aminooxy-phenylpropionic acid (AOPP) and Tris. In terms of biological role, catalyzes the irreversible transamination of the L-tryptophan metabolite L-kynurenine to form kynurenic acid (KA), an intermediate in the tryptophan catabolic pathway which is also a broad spectrum antagonist of the three ionotropic excitatory amino acid receptors among others. Also metabolizes the cysteine conjugates of certain halogenated alkenes and alkanes to form reactive metabolites. Catalyzes the beta-elimination of S-conjugates and Se-conjugates of L-(seleno)cysteine, resulting in the cleavage of the C-S or C-Se bond. This chain is Kynurenine--oxoglutarate transaminase 1, found in Homo sapiens (Human).